Here is an 884-residue protein sequence, read N- to C-terminus: MKASDIRQKFLTFFETKGHTVVRSSPLVPGNDPTLLFTNSGMVQFKDVFLGTDKRPYVRAASVQRCLRAGGKHNDLENVGYTARHHTFFEMLGNWSFGDYFKRDALVWAWELLTQEYKLPADKLWATVYQTDDEAYDIWTKVIGLPPERVVRIGDNKGAPYASDNFWQMAETGPCGPCSEIFYDHGPEIWGGPPGSPEADGDRYIEIWNNVFMQFDRQLDPQTGEYTLTPLPAPCVDTGMGMERLAAILQHVHSNYEIDLFQALVSAAARETNTKDLANNSLRVIADHIRACAFLIVDGVIPGNEGRGYVLRRIIRRAIRHGYKLGCRAAFFHKLVDDLVKEMGEAYPELREARDRVVDVLRTEEARFFETIEHGMSILDGALGELKAAGKDEKQRMLDGELAFKLHDTYGFPLDLTQDVCRENDVIVDEAAFDAAMNRQREQARAAGKFKMAAGTLDYTGDKTTFHGYDQLLSETSRVTALFVDGASVPEMRPGQTGVVVLDHTPFYAESGGQVGDQGTLKAATVWFDVADTQKVLPEVFGHQGTLRTGVLKVGDAVGAEVDAVRRARTMRNHSATHLMHKALREVLGAHVQQKGSLVDADKTRFDFSHNTPMTPLQIREVEARVNAEILANASTNAQMMGFDDAVKSGAMALFGEKYGDEVRVLTIGSSKELCGGTHVARTGDIGLFKIVGESGVAAGIRRVEAITGDNVLHYLQTLDTRIGEAAAALRAQPSELTQRIVQVQDQVKSLEKELERLKSKLAASQGDELVSQAVDVAGIKVLAAKLDGADAKTLRETMDKLKDKLKTAAIVLGSVSDGKVALIAGVTADATARIKAGELVNFVAQQVGGKGGGRPDMAQAGGTEPDKLPQALAGVTAWVQQKV.

4 residues coordinate Zn(2+): H574, H578, C675, and H679.

This sequence belongs to the class-II aminoacyl-tRNA synthetase family. Zn(2+) is required as a cofactor.

It localises to the cytoplasm. The catalysed reaction is tRNA(Ala) + L-alanine + ATP = L-alanyl-tRNA(Ala) + AMP + diphosphate. Functionally, catalyzes the attachment of alanine to tRNA(Ala) in a two-step reaction: alanine is first activated by ATP to form Ala-AMP and then transferred to the acceptor end of tRNA(Ala). Also edits incorrectly charged Ser-tRNA(Ala) and Gly-tRNA(Ala) via its editing domain. This is Alanine--tRNA ligase from Ralstonia nicotianae (strain ATCC BAA-1114 / GMI1000) (Ralstonia solanacearum).